The sequence spans 425 residues: Dihydroorotase (425 aa).

Residues H61 and H63 each contribute to the Zn(2+) site. Residues 63-65 and N95 contribute to the substrate site; that span reads HLR. Zn(2+)-binding residues include D153, H180, and H233. Position 279 (N279) interacts with substrate. D306 is a binding site for Zn(2+). The active site involves D306. Substrate is bound at residue H310.

This sequence belongs to the metallo-dependent hydrolases superfamily. DHOase family. Class I DHOase subfamily. Zn(2+) serves as cofactor.

It carries out the reaction (S)-dihydroorotate + H2O = N-carbamoyl-L-aspartate + H(+). It functions in the pathway pyrimidine metabolism; UMP biosynthesis via de novo pathway; (S)-dihydroorotate from bicarbonate: step 3/3. Its function is as follows. Catalyzes the reversible cyclization of carbamoyl aspartate to dihydroorotate. The polypeptide is Dihydroorotase (Trichlorobacter lovleyi (strain ATCC BAA-1151 / DSM 17278 / SZ) (Geobacter lovleyi)).